The primary structure comprises 333 residues: Transcription initiation factor IIB (333 aa).

The TFIIB-type zinc-finger motif lies at 33–64 (EIYRCPICGNDRFVYNYERGEVVCIVCGAVVQ). Cys37, Cys40, Cys56, and Cys59 together coordinate Zn(2+). 2 consecutive repeat copies span residues 149 to 232 (QELE…LREL) and 243 to 324 (LYIS…ELAK).

The protein belongs to the TFIIB family.

Functionally, stabilizes TBP binding to an archaeal box-A promoter. Also responsible for recruiting RNA polymerase II to the pre-initiation complex (DNA-TBP-TFIIB). The protein is Transcription initiation factor IIB of Pyrobaculum arsenaticum (strain DSM 13514 / JCM 11321 / PZ6).